A 295-amino-acid polypeptide reads, in one-letter code: Light-independent protochlorophyllide reductase iron-sulfur ATP-binding protein (295 aa).

Residues 39 to 44 and lysine 68 each bind ATP; that span reads GIGKST. Serine 43 is a Mg(2+) binding site. 2 residues coordinate [4Fe-4S] cluster: cysteine 124 and cysteine 158. An ATP-binding site is contributed by 209–210; sequence NR.

It belongs to the NifH/BchL/ChlL family. In terms of assembly, homodimer. Protochlorophyllide reductase is composed of three subunits; ChlL, ChlN and ChlB. Requires [4Fe-4S] cluster as cofactor.

It carries out the reaction chlorophyllide a + oxidized 2[4Fe-4S]-[ferredoxin] + 2 ADP + 2 phosphate = protochlorophyllide a + reduced 2[4Fe-4S]-[ferredoxin] + 2 ATP + 2 H2O. The protein operates within porphyrin-containing compound metabolism; chlorophyll biosynthesis (light-independent). In terms of biological role, component of the dark-operative protochlorophyllide reductase (DPOR) that uses Mg-ATP and reduced ferredoxin to reduce ring D of protochlorophyllide (Pchlide) to form chlorophyllide a (Chlide). This reaction is light-independent. The L component serves as a unique electron donor to the NB-component of the complex, and binds Mg-ATP. In Prochlorococcus marinus (strain MIT 9515), this protein is Light-independent protochlorophyllide reductase iron-sulfur ATP-binding protein.